The following is a 72-amino-acid chain: Translation initiation factor IF-1 (72 aa).

The S1-like domain maps to 1 to 72 (MAKDDVIQMQ…SRARIVFRTK (72 aa)).

Belongs to the IF-1 family. In terms of assembly, component of the 30S ribosomal translation pre-initiation complex which assembles on the 30S ribosome in the order IF-2 and IF-3, IF-1 and N-formylmethionyl-tRNA(fMet); mRNA recruitment can occur at any time during PIC assembly.

Its subcellular location is the cytoplasm. Its function is as follows. One of the essential components for the initiation of protein synthesis. Stabilizes the binding of IF-2 and IF-3 on the 30S subunit to which N-formylmethionyl-tRNA(fMet) subsequently binds. Helps modulate mRNA selection, yielding the 30S pre-initiation complex (PIC). Upon addition of the 50S ribosomal subunit IF-1, IF-2 and IF-3 are released leaving the mature 70S translation initiation complex. The chain is Translation initiation factor IF-1 from Herminiimonas arsenicoxydans.